The chain runs to 213 residues: Histone H1.1 (213 aa).

The disordered stretch occupies residues 1 to 43 (MSETAPVAQAASTATEKPAAAKKTKKPAKAAAPRKKPAGPSVS). An N-acetylserine modification is found at Ser2. Phosphoserine is present on residues Ser2 and Ser12. Low complexity predominate over residues 8–18 (AQAASTATEKP). An N6-acetyllysine modification is found at Lys17. Positions 20–37 (AAKKTKKPAKAAAPRKKP) are enriched in basic residues. N6-(beta-hydroxybutyryl)lysine is present on Lys36. The H15 domain maps to 38–111 (AGPSVSELIV…GAAGSFKLNK (74 aa)). Ser43 is subject to Phosphoserine. Lys54 is subject to N6-(beta-hydroxybutyryl)lysine. Arg56 is subject to Citrulline. Residue Lys66 is modified to N6-(beta-hydroxybutyryl)lysine. A Phosphoserine modification is found at Ser67. An N6-acetyllysine modification is found at Lys77. The residue at position 87 (Lys87) is an N6-(beta-hydroxybutyryl)lysine. At Lys92 the chain carries N6-(beta-hydroxybutyryl)lysine; alternate. Lys92 bears the N6-acetyllysine; alternate mark. Ser106 carries the post-translational modification Phosphoserine. Residue Lys108 is modified to N6-(beta-hydroxybutyryl)lysine. The interval 112–213 (KAESKAITTK…KPKKAAPKKK (102 aa)) is disordered. The segment covering 120–144 (TKVSVKAKASGAAKKPKKTAGAAAK) has biased composition (low complexity). Lys121 bears the N6-acetyllysine mark. Composition is skewed to basic residues over residues 145–178 (KTVKTPKKPKKPAVSKKTSKSPKKPKVVKAKKVA) and 185–213 (KAVKPKASKAKVTKPKTPAKPKKAAPKKK). Thr201 is subject to Phosphothreonine.

The protein belongs to the histone H1/H5 family. As to quaternary structure, interacts with DFFB. H1 histones are progressively phosphorylated during the cell cycle, becoming maximally phosphorylated during late G2 phase and M phase, and being dephosphorylated sharply thereafter. In terms of processing, citrullination at Arg-56 (H1R54ci) by PADI4 takes place within the DNA-binding site of H1 and results in its displacement from chromatin and global chromatin decondensation, thereby promoting pluripotency and stem cell maintenance. Post-translationally, hydroxybutyrylation of histones is induced by starvation. In terms of tissue distribution, restricted to thymus, testis and spleen. Present also in lymphocytic and neuronal cells. Increases in testis starting with a low level at day 5 and reaching high concentrations in 20-day old and adult animals.

It localises to the nucleus. The protein localises to the chromosome. In terms of biological role, histone H1 protein binds to linker DNA between nucleosomes forming the macromolecular structure known as the chromatin fiber. Histones H1 are necessary for the condensation of nucleosome chains into higher-order structured fibers. Also acts as a regulator of individual gene transcription through chromatin remodeling, nucleosome spacing and DNA methylation. This Mus musculus (Mouse) protein is Histone H1.1.